Here is a 226-residue protein sequence, read N- to C-terminus: Deoxyribose-phosphate aldolase (226 aa).

The active-site Proton donor/acceptor is D96. K157 acts as the Schiff-base intermediate with acetaldehyde in catalysis. Residue K185 is the Proton donor/acceptor of the active site.

It belongs to the DeoC/FbaB aldolase family. DeoC type 1 subfamily.

Its subcellular location is the cytoplasm. The enzyme catalyses 2-deoxy-D-ribose 5-phosphate = D-glyceraldehyde 3-phosphate + acetaldehyde. Its pathway is carbohydrate degradation; 2-deoxy-D-ribose 1-phosphate degradation; D-glyceraldehyde 3-phosphate and acetaldehyde from 2-deoxy-alpha-D-ribose 1-phosphate: step 2/2. Catalyzes a reversible aldol reaction between acetaldehyde and D-glyceraldehyde 3-phosphate to generate 2-deoxy-D-ribose 5-phosphate. This chain is Deoxyribose-phosphate aldolase, found in Trichormus variabilis (strain ATCC 29413 / PCC 7937) (Anabaena variabilis).